The following is a 1250-amino-acid chain: DNA excision repair protein ERCC-6-like (1250 aa).

Position 14 is a phosphoserine (Ser-14). Residues 21-54 (YLRYVKEAKEATKNGDLEEAFKLFNLAKDIFPNE) form a TPR 1 repeat. Positions 109–277 (SLYRDGRKGG…WSLFDFACQG (169 aa)) constitute a Helicase ATP-binding domain. Position 122–129 (122–129 (DDMGLGKT)) interacts with ATP. The DEAH box signature appears at 228–231 (DEAH). The Helicase C-terminal domain maps to 464-620 (FLMDLLKRLR…EKKNPFRYFS (157 aa)). The segment at 735 to 768 (VFPSSTKKKCPKLNKPQPQPSPLLSTHHTQEEDI) is disordered. 4 positions are modified to phosphoserine: Ser-755, Ser-774, Ser-807, and Ser-810. Thr-813 carries the phosphothreonine modification. The residue at position 820 (Ser-820) is a Phosphoserine. The interval 926 to 946 (SALQDAQASEAKLEEEPSASS) is disordered. 5 positions are modified to phosphoserine: Ser-969, Ser-971, Ser-995, Ser-1004, and Ser-1028. A disordered region spans residues 1061–1092 (ASTPKNDISPPGRFFSSQIPSSVNKSMNSRRS). Thr-1063 is modified (phosphothreonine; by PLK1). Ser-1069 carries the post-translational modification Phosphoserine. Residues 1075–1087 (FSSQIPSSVNKSM) show a composition bias toward polar residues. Ser-1098 and Ser-1118 each carry phosphoserine. The segment at 1110-1199 (MEERLDDSSE…QDKAAEATND (90 aa)) is disordered. The span at 1115–1124 (DDSSEAKGPE) shows a compositional bias: basic and acidic residues. A compositionally biased stretch (acidic residues) spans 1125 to 1135 (DYPEEGVEESS). Over residues 1149–1173 (ETLSSENKSSWLMTSKPSALAQETS) the composition is skewed to polar residues. A phosphoserine mark is found at Ser-1181 and Ser-1188. A TPR 2 repeat occupies 1200–1233 (YETLVKRGKELKECGKIQEALNCLVKALDIKSAD).

This sequence belongs to the SNF2/RAD54 helicase family. As to quaternary structure, interacts with PLK1, which phosphorylates it. Both proteins are mutually dependent on each other for correct subcellular localization. Interacts (via N-terminal TPR repeat) with BEND3 (via BEN domains 1 and 3); the interaction is direct. Phosphorylation by PLK1 prevents the association with chromosome arms and restricts its localization to the kinetochore-centromere region.

It is found in the chromosome. It localises to the centromere. The protein resides in the kinetochore. It carries out the reaction ATP + H2O = ADP + phosphate + H(+). Functionally, DNA helicase that acts as a tension sensor that associates with catenated DNA which is stretched under tension until it is resolved during anaphase. Functions as ATP-dependent DNA translocase. Can promote Holliday junction branch migration (in vitro). The protein is DNA excision repair protein ERCC-6-like (ERCC6L) of Homo sapiens (Human).